The following is a 167-amino-acid chain: Translationally-controlled tumor protein homolog (167 aa).

One can recognise a TCTP domain in the interval 1 to 167 (MLIFEDVISG…WKHGVKENKI (167 aa)).

This sequence belongs to the TCTP family.

The protein localises to the cytoplasm. Its subcellular location is the cytoskeleton. In terms of biological role, involved in protein synthesis. Involved in microtubule stabilization. The polypeptide is Translationally-controlled tumor protein homolog (TMA19) (Candida albicans (strain SC5314 / ATCC MYA-2876) (Yeast)).